We begin with the raw amino-acid sequence, 160 residues long: Cytochrome b6-f complex subunit 4 (160 aa).

3 helical membrane-spanning segments follow: residues 36–56, 95–115, and 131–151; these read LLYI…GLAV, LLGI…PFIE, and SLFL…CLPI.

It belongs to the cytochrome b family. PetD subfamily. In terms of assembly, the 4 large subunits of the cytochrome b6-f complex are cytochrome b6, subunit IV (17 kDa polypeptide, PetD), cytochrome f and the Rieske protein, while the 4 small subunits are PetG, PetL, PetM and PetN. The complex functions as a dimer.

It is found in the cellular thylakoid membrane. Component of the cytochrome b6-f complex, which mediates electron transfer between photosystem II (PSII) and photosystem I (PSI), cyclic electron flow around PSI, and state transitions. The polypeptide is Cytochrome b6-f complex subunit 4 (Prochlorococcus marinus (strain NATL2A)).